Here is a 95-residue protein sequence, read N- to C-terminus: Co-chaperonin GroES (95 aa).

Belongs to the GroES chaperonin family. As to quaternary structure, heptamer of 7 subunits arranged in a ring. Interacts with the chaperonin GroEL.

Its subcellular location is the cytoplasm. Together with the chaperonin GroEL, plays an essential role in assisting protein folding. The GroEL-GroES system forms a nano-cage that allows encapsulation of the non-native substrate proteins and provides a physical environment optimized to promote and accelerate protein folding. GroES binds to the apical surface of the GroEL ring, thereby capping the opening of the GroEL channel. The chain is Co-chaperonin GroES from Chlorobaculum parvum (strain DSM 263 / NCIMB 8327) (Chlorobium vibrioforme subsp. thiosulfatophilum).